The chain runs to 338 residues: Phenylalanine--tRNA ligase alpha subunit (338 aa).

Glu-253 provides a ligand contact to Mg(2+).

This sequence belongs to the class-II aminoacyl-tRNA synthetase family. Phe-tRNA synthetase alpha subunit type 1 subfamily. As to quaternary structure, tetramer of two alpha and two beta subunits. Mg(2+) is required as a cofactor.

It is found in the cytoplasm. The catalysed reaction is tRNA(Phe) + L-phenylalanine + ATP = L-phenylalanyl-tRNA(Phe) + AMP + diphosphate + H(+). This chain is Phenylalanine--tRNA ligase alpha subunit, found in Gloeobacter violaceus (strain ATCC 29082 / PCC 7421).